The chain runs to 167 residues: Small ribosomal subunit protein uS5 (167 aa).

The region spanning Leu19–Cys82 is the S5 DRBM domain.

The protein belongs to the universal ribosomal protein uS5 family. As to quaternary structure, part of the 30S ribosomal subunit. Contacts proteins S4 and S8.

Functionally, with S4 and S12 plays an important role in translational accuracy. Located at the back of the 30S subunit body where it stabilizes the conformation of the head with respect to the body. This chain is Small ribosomal subunit protein uS5, found in Protochlamydia amoebophila (strain UWE25).